Consider the following 65-residue polypeptide: Toxin KTx8 (65 aa).

The N-terminal stretch at Met1 to Gly25 is a signal peptide. 3 cysteine pairs are disulfide-bonded: Cys31–Cys53, Cys38–Cys61, and Cys42–Cys63.

Belongs to the short scorpion toxin superfamily. Potassium channel inhibitor family. Alpha-KTx 11 subfamily. In terms of tissue distribution, expressed by the venom gland.

It localises to the secreted. This recombinant toxin inhibits the mammalian voltage-gated potassium channels Kv1.3/KCNA3 in vitro with an IC(50) of 26.40 nM. This chain is Toxin KTx8, found in Lychas mucronatus (Chinese swimming scorpion).